Consider the following 299-residue polypeptide: ATP phosphoribosyltransferase (299 aa).

Belongs to the ATP phosphoribosyltransferase family. Long subfamily. Requires Mg(2+) as cofactor.

The protein localises to the cytoplasm. The enzyme catalyses 1-(5-phospho-beta-D-ribosyl)-ATP + diphosphate = 5-phospho-alpha-D-ribose 1-diphosphate + ATP. It participates in amino-acid biosynthesis; L-histidine biosynthesis; L-histidine from 5-phospho-alpha-D-ribose 1-diphosphate: step 1/9. With respect to regulation, feedback inhibited by histidine. Its function is as follows. Catalyzes the condensation of ATP and 5-phosphoribose 1-diphosphate to form N'-(5'-phosphoribosyl)-ATP (PR-ATP). Has a crucial role in the pathway because the rate of histidine biosynthesis seems to be controlled primarily by regulation of HisG enzymatic activity. This Baumannia cicadellinicola subsp. Homalodisca coagulata protein is ATP phosphoribosyltransferase.